Here is a 461-residue protein sequence, read N- to C-terminus: Homocitrate synthase (461 aa).

A Pyruvate carboxyltransferase domain is found at 4-259 (VGILDSTLRE…IEVVKLDKLQ (256 aa)). R12 is a 2-oxoglutarate binding site. Residue E13 coordinates Mg(2+). H76, R136, and T170 together coordinate 2-oxoglutarate. The Mg(2+) site is built by H198 and H200. The Proton acceptor role is filled by H292.

It belongs to the alpha-IPM synthase/homocitrate synthase family. Homocitrate synthase LYS20/LYS21 subfamily. Requires Mg(2+) as cofactor. The cofactor is Mn(2+).

It catalyses the reaction acetyl-CoA + 2-oxoglutarate + H2O = (2R)-homocitrate + CoA + H(+). It functions in the pathway amino-acid biosynthesis; L-lysine biosynthesis via AAA pathway; L-alpha-aminoadipate from 2-oxoglutarate: step 1/5. In terms of biological role, catalyzes the aldol-type condensation of 2-oxoglutarate with acetyl-CoA to yield homocitrate. Carries out the first step of the alpha-aminoadipate (AAA) lysine biosynthesis pathway. This is Homocitrate synthase from Saccharolobus islandicus (strain Y.N.15.51 / Yellowstone #2) (Sulfolobus islandicus).